Here is a 141-residue protein sequence, read N- to C-terminus: Galactose-6-phosphate isomerase subunit LacA (141 aa).

It belongs to the LacAB/RpiB family. Heteromultimeric protein consisting of LacA and LacB.

The enzyme catalyses aldehydo-D-galactose 6-phosphate = keto-D-tagatose 6-phosphate. Its pathway is carbohydrate metabolism; D-galactose 6-phosphate degradation; D-tagatose 6-phosphate from D-galactose 6-phosphate: step 1/1. The chain is Galactose-6-phosphate isomerase subunit LacA from Streptococcus pneumoniae serotype 2 (strain D39 / NCTC 7466).